A 385-amino-acid polypeptide reads, in one-letter code: Putative nickel insertion protein (385 aa).

Belongs to the LarC family.

In Geobacter sp. (strain M21), this protein is Putative nickel insertion protein.